The sequence spans 47 residues: Photosystem II reaction center protein Psb30 (47 aa).

Residues 19 to 39 form a helical membrane-spanning segment; it reads VIFQLLSVALIVIAGPVVIFL.

It belongs to the Psb30/Ycf12 family. In terms of assembly, PSII is composed of 1 copy each of membrane proteins PsbA, PsbB, PsbC, PsbD, PsbE, PsbF, PsbH, PsbI, PsbJ, PsbK, PsbL, PsbM, PsbT, PsbX, PsbY, PsbZ, Psb30/Ycf12, peripheral proteins PsbO, CyanoQ (PsbQ), PsbU, PsbV and a large number of cofactors. It forms dimeric complexes.

It is found in the cellular thylakoid membrane. Functionally, a core subunit of photosystem II (PSII), probably helps stabilize the reaction center. The protein is Photosystem II reaction center protein Psb30 of Nostoc punctiforme (strain ATCC 29133 / PCC 73102).